Consider the following 426-residue polypeptide: Mannose-1-phosphate guanyltransferase alpha-B (426 aa).

It belongs to the transferase hexapeptide repeat family.

It catalyses the reaction alpha-D-mannose 1-phosphate + GTP + H(+) = GDP-alpha-D-mannose + diphosphate. It participates in nucleotide-sugar biosynthesis; GDP-alpha-D-mannose biosynthesis; GDP-alpha-D-mannose from alpha-D-mannose 1-phosphate (GTP route): step 1/1. In Xenopus laevis (African clawed frog), this protein is Mannose-1-phosphate guanyltransferase alpha-B (gmppa-b).